Reading from the N-terminus, the 2290-residue chain is Protein Ycf2 (2290 aa).

The interval 505-530 is disordered; that stretch reads GSNPTERSTRDQKSLKKQQDVSFVPP. Positions 511 to 523 are enriched in basic and acidic residues; sequence RSTRDQKSLKKQQ. Residue 1639–1646 participates in ATP binding; it reads GSIGTGRS.

The protein belongs to the Ycf2 family.

Its subcellular location is the plastid. It localises to the chloroplast stroma. Functionally, probable ATPase of unknown function. Its presence in a non-photosynthetic plant (Epifagus virginiana) and experiments in tobacco indicate that it has an essential function which is probably not related to photosynthesis. The polypeptide is Protein Ycf2 (Ceratophyllum demersum (Rigid hornwort)).